Reading from the N-terminus, the 342-residue chain is Arrestin domain-containing protein 5 (342 aa).

The protein belongs to the arrestin family. In terms of tissue distribution, testis-enriched.

It localises to the membrane. Its function is as follows. Plays an essential role in spermatogenesis. May be involved in the anchoring of the sperm head to the tail during spermatogenesis by affecting SEC22A-mediated SUN5 and NDC1 transport and localization. This chain is Arrestin domain-containing protein 5 (ARRDC5), found in Homo sapiens (Human).